Reading from the N-terminus, the 100-residue chain is Urease subunit gamma (100 aa).

The protein belongs to the urease gamma subunit family. In terms of assembly, heterotrimer of UreA (gamma), UreB (beta) and UreC (alpha) subunits. Three heterotrimers associate to form the active enzyme.

The protein resides in the cytoplasm. It carries out the reaction urea + 2 H2O + H(+) = hydrogencarbonate + 2 NH4(+). Its pathway is nitrogen metabolism; urea degradation; CO(2) and NH(3) from urea (urease route): step 1/1. This chain is Urease subunit gamma, found in Mycolicibacterium vanbaalenii (strain DSM 7251 / JCM 13017 / BCRC 16820 / KCTC 9966 / NRRL B-24157 / PYR-1) (Mycobacterium vanbaalenii).